A 364-amino-acid polypeptide reads, in one-letter code: Protein Wnt-16 (364 aa).

The signal sequence occupies residues 1–29 (MDRAALLALPSLCALWAAVLSLLPCGTQG). Intrachain disulfides connect Cys-81–Cys-92, Cys-138–Cys-146, and Cys-148–Cys-167. Asn-142 is a glycosylation site (N-linked (GlcNAc...) asparagine). A glycan (N-linked (GlcNAc...) asparagine) is linked at Asn-188. Cystine bridges form between Cys-220–Cys-234, Cys-222–Cys-229, Cys-293–Cys-324, Cys-309–Cys-319, Cys-323–Cys-363, Cys-339–Cys-354, Cys-341–Cys-351, and Cys-346–Cys-347. The O-palmitoleoyl serine; by PORCN moiety is linked to residue Ser-226. N-linked (GlcNAc...) asparagine glycosylation occurs at Asn-310.

It belongs to the Wnt family. In terms of processing, palmitoleoylation is required for efficient binding to frizzled receptors. Depalmitoleoylation leads to Wnt signaling pathway inhibition.

It localises to the secreted. It is found in the extracellular space. Its subcellular location is the extracellular matrix. Ligand for members of the frizzled family of seven transmembrane receptors. Probable developmental protein. May be a signaling molecule which affects the development of discrete regions of tissues. Is likely to signal over only few cell diameters. In Mus musculus (Mouse), this protein is Protein Wnt-16 (Wnt16).